Here is a 394-residue protein sequence, read N- to C-terminus: Elongation factor Tu (394 aa).

The tr-type G domain occupies 10 to 204 (KPHVNVGTIG…ALDSYIPEPE (195 aa)). A G1 region spans residues 19-26 (GHVDHGKT). Position 19–26 (19–26 (GHVDHGKT)) interacts with GTP. Thr26 is a binding site for Mg(2+). The interval 60-64 (GITIN) is G2. Positions 81 to 84 (DCPG) are G3. GTP is bound by residues 81-85 (DCPGH) and 136-139 (NKCD). Residues 136–139 (NKCD) form a G4 region. The segment at 174–176 (SAL) is G5.

The protein belongs to the TRAFAC class translation factor GTPase superfamily. Classic translation factor GTPase family. EF-Tu/EF-1A subfamily. Monomer.

It localises to the cytoplasm. The enzyme catalyses GTP + H2O = GDP + phosphate + H(+). Functionally, GTP hydrolase that promotes the GTP-dependent binding of aminoacyl-tRNA to the A-site of ribosomes during protein biosynthesis. The protein is Elongation factor Tu of Shewanella amazonensis (strain ATCC BAA-1098 / SB2B).